The sequence spans 226 residues: 7-cyano-7-deazaguanine synthase (226 aa).

Position 10–20 (10–20) interacts with ATP; it reads LSGGLDSATAA. Zn(2+)-binding residues include Cys-191, Cys-199, Cys-202, and Cys-205.

The protein belongs to the QueC family. Zn(2+) is required as a cofactor.

It catalyses the reaction 7-carboxy-7-deazaguanine + NH4(+) + ATP = 7-cyano-7-deazaguanine + ADP + phosphate + H2O + H(+). It functions in the pathway purine metabolism; 7-cyano-7-deazaguanine biosynthesis. Functionally, catalyzes the ATP-dependent conversion of 7-carboxy-7-deazaguanine (CDG) to 7-cyano-7-deazaguanine (preQ(0)). The chain is 7-cyano-7-deazaguanine synthase from Synechococcus sp. (strain CC9311).